A 403-amino-acid polypeptide reads, in one-letter code: Argininosuccinate synthase (403 aa).

ATP-binding positions include 10-18 (AYSGGVDTS) and Ala38. Tyr89 provides a ligand contact to L-citrulline. An ATP-binding site is contributed by Gly119. The L-aspartate site is built by Thr121, Asn125, and Asp126. Position 125 (Asn125) interacts with L-citrulline. Residues Arg129, Ser177, Ser186, Glu262, and Tyr274 each coordinate L-citrulline.

This sequence belongs to the argininosuccinate synthase family. Type 1 subfamily. As to quaternary structure, homotetramer.

The protein resides in the cytoplasm. It catalyses the reaction L-citrulline + L-aspartate + ATP = 2-(N(omega)-L-arginino)succinate + AMP + diphosphate + H(+). It participates in amino-acid biosynthesis; L-arginine biosynthesis; L-arginine from L-ornithine and carbamoyl phosphate: step 2/3. The protein is Argininosuccinate synthase of Synechococcus sp. (strain CC9605).